Reading from the N-terminus, the 339-residue chain is Ribosome biogenesis protein BRX1 homolog (339 aa).

Residues 1-34 (MSAYKRKRGSLPEVATNTKKAKKQLAGSEQEATA) are disordered. The region spanning 53–242 (ERVLIFSSRG…LIKIFKGSFG (190 aa)) is the Brix domain. The tract at residues 304 to 339 (AEEKPQVIETEPPAPKPKMKRKDKQFKRQRMAKKRM) is disordered. Over residues 320–339 (PKMKRKDKQFKRQRMAKKRM) the composition is skewed to basic residues.

The protein belongs to the BRX1 family. In terms of tissue distribution, ubiquitous.

It localises to the nucleus. The protein localises to the nucleolus. Functionally, required for biogenesis of the 60S ribosomal subunit. The protein is Ribosome biogenesis protein BRX1 homolog (brix1) of Xenopus laevis (African clawed frog).